Reading from the N-terminus, the 59-residue chain is Photosystem II reaction center protein K (59 aa).

Residues 1–22 (MILYSHLSTLIDIDLSNNIFLA) constitute a propeptide that is removed on maturation. A helical transmembrane segment spans residues 30–50 (IFDPLVDVMPVIPVFFLLLAF).

This sequence belongs to the PsbK family. PSII is composed of 1 copy each of membrane proteins PsbA, PsbB, PsbC, PsbD, PsbE, PsbF, PsbH, PsbI, PsbJ, PsbK, PsbL, PsbM, PsbT, PsbX, PsbY, PsbZ, Psb30/Ycf12, at least 3 peripheral proteins of the oxygen-evolving complex and a large number of cofactors. It forms dimeric complexes.

The protein localises to the plastid. Its subcellular location is the chloroplast thylakoid membrane. Functionally, one of the components of the core complex of photosystem II (PSII). PSII is a light-driven water:plastoquinone oxidoreductase that uses light energy to abstract electrons from H(2)O, generating O(2) and a proton gradient subsequently used for ATP formation. It consists of a core antenna complex that captures photons, and an electron transfer chain that converts photonic excitation into a charge separation. This chain is Photosystem II reaction center protein K, found in Chara vulgaris (Common stonewort).